Consider the following 597-residue polypeptide: Sodium/mannose cotransporter SLC5A10 (597 aa).

The Extracellular segment spans residues 1 to 16; that stretch reads MAVDNSTSDAHTPGRQ. Asparagine 5 carries N-linked (GlcNAc...) asparagine glycosylation. The chain crosses the membrane as a helical span at residues 17–37; that stretch reads LTVVDIAIIAVYFALNVAVGI. At 38–73 the chain is on the cytoplasmic side; the sequence is WSSCRASRNTVRGYFLAGRDMTWWPIGASLFASSEG. Residues 74–94 form a helical membrane-spanning segment; the sequence is SGLFIGLAGSGAAGGLAVAGF. Residues 95 to 100 are Extracellular-facing; the sequence is EWNATY. A glycan (N-linked (GlcNAc...) asparagine) is linked at asparagine 97. A helical transmembrane segment spans residues 101-121; it reads VLLALAWVFVPIYLSSEIVTM. Topologically, residues 122–139 are cytoplasmic; the sequence is PEYMQKRYGGQRIRMYLS. A helical transmembrane segment spans residues 140 to 162; the sequence is VLSLLLSVFTKISIDLYAGALFV. Topologically, residues 163-174 are extracellular; it reads HICLGWNFYLST. Residues 175-195 traverse the membrane as a helical segment; that stretch reads VIMLAITALYTIAGGLTAVIY. The Cytoplasmic segment spans residues 196-201; sequence TDALQT. Residues 202 to 222 traverse the membrane as a helical segment; sequence LVMVAGAVILTIKAFEQIGGY. Residues 223 to 265 lie on the Extracellular side of the membrane; it reads EQLAEAYAQAVPSRTISNTTCHVPRADAMHMFRDPYTADLPWT. Residues 266–286 traverse the membrane as a helical segment; the sequence is GMTFGLTIMAAWYWCTDQVIV. Residues 287–301 lie on the Cytoplasmic side of the membrane; it reads QRSLSARDLNHAKGG. A helical transmembrane segment spans residues 302–322; that stretch reads SILASYLKMLPMGLMVMPGMI. The Extracellular portion of the chain corresponds to 323–367; it reads SRVLFPDDVGCVVPAECLRACGAEIGCSNIAYPKLVMELMPTGLR. A helical transmembrane segment spans residues 368-388; that stretch reads GLMVAVMMAALMSSLTSIFNS. Over 389 to 410 the chain is Cytoplasmic; the sequence is SSTLFTMDIWRRLRPRAGEREL. A helical transmembrane segment spans residues 411–431; it reads LLVGRLVIVVLVGVSVAWIPV. Topologically, residues 432–444 are extracellular; the sequence is LQGSNGGQLFIYM. Residues 445 to 465 traverse the membrane as a helical segment; that stretch reads QSVTSSLAPPVTAVFVLGIFW. The Cytoplasmic segment spans residues 466–472; the sequence is RRANEQG. The chain crosses the membrane as a helical span at residues 473–493; the sequence is AFWGLMAGLAVGATRLVLEFL. Residues 494–514 are Extracellular-facing; it reads HPAPPCGHPDTRPPILHGVHY. The helical transmembrane segment at 515 to 535 threads the bilayer; that stretch reads LHFAVALFLLSGAVVVAGSLL. At 536-576 the chain is on the cytoplasmic side; the sequence is TPHPQGVQIQSLTWWTLAQDLPLGVKTGDGRASQRHAFWAR. Residues 577–597 form a helical membrane-spanning segment; the sequence is VCGVNAILLMCVNIFFYTYFA.

It belongs to the sodium:solute symporter (SSF) (TC 2.A.21) family. In terms of tissue distribution, predominantyl expressed in kidney. Also detected at very low levels in testes, skeletal muscle, and spleen.

It is found in the apical cell membrane. It carries out the reaction D-mannose(out) + Na(+)(out) = D-mannose(in) + Na(+)(in). The enzyme catalyses D-fructopyranose(out) + Na(+)(out) = D-fructopyranose(in) + Na(+)(in). Electrogenic Na+-coupled sugar symporter that actively transports D-mannose or D-fructose at the plasma membrane, with a Na+ to sugar coupling ratio of 1:1. Transporter activity is driven by a transmembrane Na+ electrochemical gradient set by the Na+/K+ pump. Exclusively recognizes sugar substrates having a pyranose ring with an axial hydroxyl group on carbon 2. Has likely evolved to enable renal reabsorption of D-mannose, an important constituent of oligosaccharide chains of glycoproteins. Contributes to dietary D-fructose reabsorption from glomerular filtrate across the brush border of the kidney. In Bos taurus (Bovine), this protein is Sodium/mannose cotransporter SLC5A10 (SLC5A10).